We begin with the raw amino-acid sequence, 134 residues long: Protein LctB (134 aa).

In Bacillus caldotenax, this protein is Protein LctB (lctB).